Here is a 698-residue protein sequence, read N- to C-terminus: MPVSWFLLSLALGRNPVVVSLERLMEPQDTARCSLGLSCHLWDGDVLCLPGSLQSAPGPVLVPTRLQTELVLRCPQKTDCALCVRVVVHLAVHGHWAEPEEAGKSDSELQESRNASLQAQVVLSFQAYPIARCALLEVQVPADLVQPGQSVGSAVFDCFEASLGAEVQIWSYTKPRYQKELNLTQQLPDCRGLEVRDSIQSCWVLPWLNVSTDGDNVLLTLDVSEEQDFSFLLYLRPVPDALKSLWYKNLTGPQNITLNHTDLVPCLCIQVWSLEPDSERVEFCPFREDPGAHRNLWHIARLRVLSPGVWQLDAPCCLPGKVTLCWQAPDQSPCQPLVPPVPQKNATVNEPQDFQLVAGHPNLCVQVSTWEKVQLQACLWADSLGPFKDDMLLVEMKTGLNNTSVCALEPSGCTPLPSMASTRAARLGEELLQDFRSHQCMQLWNDDNMGSLWACPMDKYIHRRWVLVWLACLLLAAALFFFLLLKKDRRKAARGSRTALLLHSADGAGYERLVGALASALSQMPLRVAVDLWSRRELSAHGALAWFHHQRRRILQEGGVVILLFSPAAVAQCQQWLQLQTVEPGPHDALAAWLSCVLPDFLQGRATGRYVGVYFDGLLHPDSVPSPFRVAPLFSLPSQLPAFLDALQGGCSTSAGRPADRVERVTQALRSALDSCTSSSEAPGCCEEWDLGPCTTLE.

An N-terminal signal peptide occupies residues 1 to 21 (MPVSWFLLSLALGRNPVVVSL). Over 22 to 464 (ERLMEPQDTA…CPMDKYIHRR (443 aa)) the chain is Extracellular. Asparagine 182 carries an N-linked (GlcNAc...) asparagine glycan. The cysteines at positions 190 and 202 are disulfide-linked. N-linked (GlcNAc...) asparagine glycans are attached at residues asparagine 209, asparagine 249, asparagine 255, and asparagine 259. Disulfide bonds link cysteine 266–cysteine 316, cysteine 268–cysteine 284, cysteine 325–cysteine 334, cysteine 364–cysteine 378, cysteine 406–cysteine 413, and cysteine 440–cysteine 455. Residues 465 to 485 (WVLVWLACLLLAAALFFFLLL) form a helical membrane-spanning segment. The Cytoplasmic portion of the chain corresponds to 486 to 698 (KKDRRKAARG…WDLGPCTTLE (213 aa)). The SEFIR domain maps to 496 to 645 (SRTALLLHSA…LPSQLPAFLD (150 aa)).

As to quaternary structure, homodimer; disulfide-linked. Heterodimer with IL17RA. Heterodimerization with IL17RA is independent of the cytoplasmic tail. Associates with non-glycosylated IL17RA constitutively. Binding of IL17A and IL17F induces association with glycosylated IL17RA. Forms complexes with 2:1 binding stoichiometry: two receptor chains for one interleukin molecule. IL17A homodimer preferentially drives the formation of IL17RA-IL17RC heterodimeric receptor complex, whereas IL17F homodimer forms predominantly complexes with IL17RC homodimer. IL17A-IL17F forms complexes with IL17RA-IL17RC, but with lower affinity when compared to IL17A homodimer. IL17RC chain cannot distinguish between IL17A and IL17F molecules, potentially enabling the formation of topologically distinct complexes. Interacts (through SEFIR domain and extended downstream region) with TRAF3IP2/ACT1 (phosphorylated). As to expression, highly expressed in colonic epithelial cells. Expressed in lung epithelial cells. Expressed in macrophages. Highly expressed in B-1a B cells and at a lower extent in B-1b and B-2 B cells (at protein level).

It localises to the cell membrane. Receptor for IL17A and IL17F, major effector cytokines of innate and adaptive immune system involved in antimicrobial host defense and maintenance of tissue integrity. Receptor for IL17A and IL17F homodimers as part of a heterodimeric complex with IL17RA. Receptor for the heterodimer formed by IL17A and IL17B as part of a heterodimeric complex with IL17RA. Has also been shown to be the cognate receptor for IL17F and to bind IL17A with high affinity without the need for IL17RA. Upon binding of IL17F homodimer triggers downstream activation of TRAF6 and NF-kappa-B signaling pathway. Induces transcriptional activation of IL33, a potent cytokine that stimulates group 2 innate lymphoid cells and adaptive T-helper 2 cells involved in pulmonary allergic response to fungi. Promotes sympathetic innervation of peripheral organs by coordinating the communication between gamma-delta T cells and parenchymal cells. Stimulates sympathetic innervation of thermogenic adipose tissue by driving TGFB1 expression. Binding of IL17A-IL17F to IL17RA-IL17RC heterodimeric receptor complex triggers homotypic interaction of IL17RA and IL17RC chains with TRAF3IP2 adapter through SEFIR domains. This leads to downstream TRAF6-mediated activation of NF-kappa-B and MAPkinase pathways ultimately resulting in transcriptional activation of cytokines, chemokines, antimicrobial peptides and matrix metalloproteinases, with potential strong immune inflammation. Primarily induces neutrophil activation and recruitment at infection and inflammatory sites. Stimulates the production of antimicrobial beta-defensins DEFB1, DEFB103A, and DEFB104A by mucosal epithelial cells, limiting the entry of microbes through the epithelial barriers. The polypeptide is Interleukin-17 receptor C (Il17rc) (Mus musculus (Mouse)).